Consider the following 491-residue polypeptide: Fibrinogen beta chain (491 aa).

A signal peptide spans 1–30; the sequence is MKRMVSWSFHKLKTMKHLLLLLLCVFLVKS. Gln-31 is subject to Pyrrolidone carboxylic acid. Positions 44–75 are disordered; that stretch reads RGHRPLDKKREEAPSLRPAPPPISGGGYRARP. Residues 45-47 form a beta-chain polymerization, binding distal domain of another fibrin region; it reads GHR. The segment covering 47–57 has biased composition (basic and acidic residues); that stretch reads RPLDKKREEAP. A coiled-coil region spans residues 157–222; the sequence is KRQKQVKDNE…ESDVSAQMEY (66 aa). 2 cysteine pairs are disulfide-bonded: Cys-231-Cys-316 and Cys-241-Cys-270. The region spanning 232–488 is the Fibrinogen C-terminal domain; that stretch reads NIPVVSGKEC…KMSMKIRPFF (257 aa). Asn-394 carries an N-linked (GlcNAc...) asparagine glycan. A disulfide bridge links Cys-424 with Cys-437.

As to quaternary structure, heterohexamer; disulfide linked. Contains 2 sets of 3 non-identical chains (alpha, beta and gamma). The 2 heterotrimers are in head to head conformation with the N-termini in a small central domain. In terms of processing, conversion of fibrinogen to fibrin is triggered by thrombin, which cleaves fibrinopeptides A and B from alpha and beta chains, and thus exposes the N-terminal polymerization sites responsible for the formation of the soft clot. The soft clot is converted into the hard clot by factor XIIIA which catalyzes the epsilon-(gamma-glutamyl)lysine cross-linking between gamma chains (stronger) and between alpha chains (weaker) of different monomers. Detected in blood plasma (at protein level).

Its subcellular location is the secreted. Functionally, cleaved by the protease thrombin to yield monomers which, together with fibrinogen alpha (FGA) and fibrinogen gamma (FGG), polymerize to form an insoluble fibrin matrix. Fibrin has a major function in hemostasis as one of the primary components of blood clots. In addition, functions during the early stages of wound repair to stabilize the lesion and guide cell migration during re-epithelialization. Was originally thought to be essential for platelet aggregation, based on in vitro studies using anticoagulated blood. However subsequent studies have shown that it is not absolutely required for thrombus formation in vivo. Enhances expression of SELP in activated platelets. Maternal fibrinogen is essential for successful pregnancy. Fibrin deposition is also associated with infection, where it protects against IFNG-mediated hemorrhage. May also facilitate the antibacterial immune response via both innate and T-cell mediated pathways. This is Fibrinogen beta chain (FGB) from Homo sapiens (Human).